The primary structure comprises 1678 residues: Hispidin synthase (1678 aa).

The adenylation (A) domain stretch occupies residues 33 to 453 (GEHRWSYREL…WLGRNTDFIQ (421 aa)). Positions 586 to 661 (DELSNTVKHI…SLSNAVYAKL (76 aa)) constitute a Carrier 1 domain. O-(pantetheine 4'-phosphoryl)serine is present on Ser620. Residues 683 to 1108 (GKEIVVVGQA…GTLGGIVLEA (426 aa)) form the Ketosynthase family 3 (KS3) domain. Active-site for beta-ketoacyl synthase activity residues include Cys852, His988, and His1029. Positions 1201-1499 (YKRGALAFAF…VAWSLLLSNG (299 aa)) are malonyl-CoA:ACP transacylase (MAT) domain. Residues 1562–1582 (EETLSSGSSTPTLENTDLDSG) form a disordered region. A compositionally biased stretch (polar residues) spans 1564 to 1576 (TLSSGSSTPTLEN). A Carrier 2 domain is found at 1597–1672 (DDLRDSIVSS…EMVSNLVEQA (76 aa)). Ser1632 is modified (O-(pantetheine 4'-phosphoryl)serine).

This sequence in the N-terminal section; belongs to the NRP synthetase family.

It carries out the reaction (E)-caffeate + 2 malonyl-CoA + ATP + H(+) = hispidin + AMP + 2 CO2 + diphosphate + 2 CoA. It functions in the pathway secondary metabolite biosynthesis. PKS-NRPS hybrid synthetase; part of the gene cluster that mediates the fungal bioluminescence cycle. Performs the biosynthesis of hispidin from caffeic acid by two cycles of addition of malonyl units followed by lactonization. The fungal bioluminescence cycle begins with the hispidin synthetase that catalyzes the formation of hispidin which is further hydroxylated by the hispidin-3-hydroxylase, yielding the fungal luciferin 3-hydroxyhispidin. The luciferase then produces an endoperoxide as a high-energy intermediate with decomposition that yields oxyluciferin (also known as caffeoylpyruvate) and light emission. Oxyluciferin can be recycled to caffeic acid by caffeoylpyruvate hydrolase. The polypeptide is Hispidin synthase (Neonothopanus nambi (Agaricus nambi)).